Consider the following 389-residue polypeptide: Phosphopentomutase (389 aa).

Mn(2+)-binding residues include aspartate 10, aspartate 282, histidine 287, aspartate 323, histidine 324, and histidine 335.

It belongs to the phosphopentomutase family. The cofactor is Mn(2+).

It localises to the cytoplasm. It carries out the reaction 2-deoxy-alpha-D-ribose 1-phosphate = 2-deoxy-D-ribose 5-phosphate. The catalysed reaction is alpha-D-ribose 1-phosphate = D-ribose 5-phosphate. The protein operates within carbohydrate degradation; 2-deoxy-D-ribose 1-phosphate degradation; D-glyceraldehyde 3-phosphate and acetaldehyde from 2-deoxy-alpha-D-ribose 1-phosphate: step 1/2. In terms of biological role, isomerase that catalyzes the conversion of deoxy-ribose 1-phosphate (dRib-1-P) and ribose 1-phosphate (Rib-1-P) to deoxy-ribose 5-phosphate (dRib-5-P) and ribose 5-phosphate (Rib-5-P), respectively. The protein is Phosphopentomutase of Clostridium kluyveri (strain NBRC 12016).